Here is a 58-residue protein sequence, read N- to C-terminus: Small ribosomal subunit protein bS21 (58 aa).

A compositionally biased stretch (basic and acidic residues) spans 32–42 (VRKREHYEKPS). A disordered region spans residues 32–58 (VRKREHYEKPSVKKKKKSEAARKRKFK). Residues 43–58 (VKKKKKSEAARKRKFK) are compositionally biased toward basic residues.

The protein belongs to the bacterial ribosomal protein bS21 family.

This Clostridium botulinum (strain Okra / Type B1) protein is Small ribosomal subunit protein bS21.